The following is a 333-amino-acid chain: 4-hydroxy-3-methylbut-2-enyl diphosphate reductase (333 aa).

Position 20 (Cys-20) interacts with [4Fe-4S] cluster. Residues His-49 and His-85 each contribute to the (2E)-4-hydroxy-3-methylbut-2-enyl diphosphate site. Dimethylallyl diphosphate-binding residues include His-49 and His-85. Isopentenyl diphosphate is bound by residues His-49 and His-85. Residue Cys-107 participates in [4Fe-4S] cluster binding. His-135 provides a ligand contact to (2E)-4-hydroxy-3-methylbut-2-enyl diphosphate. His-135 contributes to the dimethylallyl diphosphate binding site. Residue His-135 participates in isopentenyl diphosphate binding. The active-site Proton donor is Glu-137. Thr-176 provides a ligand contact to (2E)-4-hydroxy-3-methylbut-2-enyl diphosphate. Residue Cys-206 participates in [4Fe-4S] cluster binding. Ser-234, Ser-235, Asn-236, and Ser-279 together coordinate (2E)-4-hydroxy-3-methylbut-2-enyl diphosphate. Dimethylallyl diphosphate is bound by residues Ser-234, Ser-235, Asn-236, and Ser-279. The isopentenyl diphosphate site is built by Ser-234, Ser-235, Asn-236, and Ser-279.

It belongs to the IspH family. The cofactor is [4Fe-4S] cluster.

The catalysed reaction is isopentenyl diphosphate + 2 oxidized [2Fe-2S]-[ferredoxin] + H2O = (2E)-4-hydroxy-3-methylbut-2-enyl diphosphate + 2 reduced [2Fe-2S]-[ferredoxin] + 2 H(+). It catalyses the reaction dimethylallyl diphosphate + 2 oxidized [2Fe-2S]-[ferredoxin] + H2O = (2E)-4-hydroxy-3-methylbut-2-enyl diphosphate + 2 reduced [2Fe-2S]-[ferredoxin] + 2 H(+). It functions in the pathway isoprenoid biosynthesis; dimethylallyl diphosphate biosynthesis; dimethylallyl diphosphate from (2E)-4-hydroxy-3-methylbutenyl diphosphate: step 1/1. The protein operates within isoprenoid biosynthesis; isopentenyl diphosphate biosynthesis via DXP pathway; isopentenyl diphosphate from 1-deoxy-D-xylulose 5-phosphate: step 6/6. Functionally, catalyzes the conversion of 1-hydroxy-2-methyl-2-(E)-butenyl 4-diphosphate (HMBPP) into a mixture of isopentenyl diphosphate (IPP) and dimethylallyl diphosphate (DMAPP). Acts in the terminal step of the DOXP/MEP pathway for isoprenoid precursor biosynthesis. The polypeptide is 4-hydroxy-3-methylbut-2-enyl diphosphate reductase (Rhizobium etli (strain CIAT 652)).